We begin with the raw amino-acid sequence, 170 residues long: Phosphothreonine lyase OspF (170 aa).

Catalysis depends on His82, which acts as the Proton donor. Lys112 (proton acceptor) is an active-site residue.

Belongs to the phosphothreonine lyase family.

It is found in the secreted. In terms of biological role, catalyzes the removal of the phosphate group from the phosphothreonine in the mitogen-activated protein kinases such as MAPK2/ERK2, MAPK3/ERK1, MAPK8 and MAPK14 in an irreversible reaction, thus preventing the downstream phosphorylation of histone H3. This epigenetic modification results in inhibition of the transcription of a specific subset of pro-inflammatory genes, and ultimately to a reduced immune response against the invading pathogen. The diminished immune response enhances the bacterium's ability to disseminate and multiply within the host. The chain is Phosphothreonine lyase OspF (ospF) from Shigella boydii.